A 209-amino-acid chain; its full sequence is NADH-ubiquinone oxidoreductase subunit 9 (209 aa).

It belongs to the complex I 30 kDa subunit family. As to quaternary structure, complex I is composed of about 30 different subunits.

The protein localises to the mitochondrion inner membrane. It catalyses the reaction a ubiquinone + NADH + 5 H(+)(in) = a ubiquinol + NAD(+) + 4 H(+)(out). Core subunit of the mitochondrial membrane respiratory chain NADH dehydrogenase (Complex I) that is believed to belong to the minimal assembly required for catalysis. Complex I functions in the transfer of electrons from NADH to the respiratory chain. The immediate electron acceptor for the enzyme is believed to be ubiquinone. The polypeptide is NADH-ubiquinone oxidoreductase subunit 9 (NAD9) (Paramecium tetraurelia).